The following is a 452-amino-acid chain: Keratin, type I cytoskeletal 15 (452 aa).

The segment at Met1–Asn97 is head. A phosphoserine mark is found at Ser15, Ser16, Ser28, Ser33, and Ser47. Residues Glu98 to Trp133 form a coil 1A region. One can recognise an IF rod domain in the interval Glu98–Met410. Thr124 carries the phosphothreonine modification. Residues Tyr134–Thr152 form a linker 1 region. The interval Met153–Phe244 is coil 1B. The tract at residues Ser245–Leu264 is linker 12. The interval Thr265–Gln406 is coil 2. Lys293 is covalently cross-linked (Glycyl lysine isopeptide (Lys-Gly) (interchain with G-Cter in SUMO2)). 2 positions are modified to phosphothreonine: Thr294 and Thr316. Positions Asp407–Ile452 are tail. Residues Ile413–Ile452 are disordered. Lys443 participates in a covalent cross-link: Glycyl lysine isopeptide (Lys-Gly) (interchain with G-Cter in SUMO1); alternate. Lys443 is covalently cross-linked (Glycyl lysine isopeptide (Lys-Gly) (interchain with G-Cter in SUMO2); alternate).

This sequence belongs to the intermediate filament family. As to quaternary structure, heterotetramer of two type I and two type II keratins. Forms a heterodimer with KRT14. Interacts with PLEC isoform 1C, when in a heterodimer with KRT14. Interacts with NOD2. In terms of tissue distribution, expressed strongly in the basal cell layer at the tips of rete-like prominences (RLPs) of adult dorsal tongue, outer root sheath (ORS) of hair follicle and skin epidermis (at protein level).

In the absence of KRT14, makes a bona fide, but ultrastructurally distinct keratin filament network with KRT5. In Mus musculus (Mouse), this protein is Keratin, type I cytoskeletal 15 (Krt15).